The chain runs to 1284 residues: ABC multidrug transporter atrC (1284 aa).

Basic and acidic residues predominate over residues 1-11 (MKSTAESKETP). Residues 1–24 (MKSTAESKETPSQDESTTSVPCTE) form a disordered region. The next 6 membrane-spanning stretches (helical) occupy residues 55–75 (AVAI…NLIF), 99–119 (AAEL…LSYT), 178–198 (IGLL…RLWC), 203–223 (TLIC…VAAV), 282–302 (LLGL…GLAF), and 320–340 (IFTV…LAPY). The ABC transmembrane type-1 1 domain maps to 55–346 (AVAILAACAS…LAPYSIEFSR (292 aa)). Residues 381 to 626 (VELENVTFSY…DGVYAGLVKI (246 aa)) form the ABC transporter 1 domain. N-linked (GlcNAc...) asparagine glycosylation is found at asparagine 385 and asparagine 401. 416–423 (GQSGSGKS) lines the ATP pocket. N-linked (GlcNAc...) asparagine glycans are attached at residues asparagine 488 and asparagine 632. 2 consecutive transmembrane segments (helical) span residues 705–725 (LVVL…AILM) and 745–765 (FYAS…LAVG). The region spanning 705–992 (LVVLLGCLGG…LFQWSTSITK (288 aa)) is the ABC transmembrane type-1 2 domain. Asparagine 800 carries an N-linked (GlcNAc...) asparagine glycan. Helical transmembrane passes span 824–844 (IALV…AIAF), 846–866 (WKLG…AGMV), 931–951 (MICF…GFWY), and 955–975 (LVSL…SVFF). An N-linked (GlcNAc...) asparagine glycan is attached at asparagine 995. One can recognise an ABC transporter 2 domain in the interval 1027–1280 (IAMDNVRFSY…GGLYRRMCEA (254 aa)). An ATP-binding site is contributed by 1062-1069 (GSSGCGKS). N-linked (GlcNAc...) asparagine glycosylation occurs at asparagine 1122.

This sequence belongs to the ABC transporter superfamily. ABCB family. Multidrug resistance exporter (TC 3.A.1.201) subfamily.

The protein resides in the cell membrane. Pleiotropic ABC efflux transporter involved in the protection of the cells against a wide range of toxic compounds. This chain is ABC multidrug transporter atrC, found in Emericella nidulans (Aspergillus nidulans).